A 103-amino-acid polypeptide reads, in one-letter code: Pterin-4-alpha-carbinolamine dehydratase 2 (103 aa).

Belongs to the pterin-4-alpha-carbinolamine dehydratase family. In terms of tissue distribution, highest level found in the kidney, liver, heart and ovarian follicles.

It carries out the reaction (4aS,6R)-4a-hydroxy-L-erythro-5,6,7,8-tetrahydrobiopterin = (6R)-L-erythro-6,7-dihydrobiopterin + H2O. Its function is as follows. Involved in tetrahydrobiopterin biosynthesis. Seems to both prevent the formation of 7-pterins and accelerate the formation of quinonoid-BH2. Functionally, regulates the dimerization of homeodomain protein HNF-1-alpha and enhances its transcriptional activity. The polypeptide is Pterin-4-alpha-carbinolamine dehydratase 2 (PCBD2) (Gallus gallus (Chicken)).